The following is a 700-amino-acid chain: Long chain acyl-CoA synthetase 7, peroxisomal (700 aa).

Residues 1–29 (MEFASPEQRRLETIRSHIDTSPTNDQSSS) are disordered. Residues 7–18 (EQRRLETIRSHI) show a composition bias toward basic and acidic residues. A Microbody targeting signal motif is present at residues 10 to 18 (RLETIRSHI). The span at 19-29 (DTSPTNDQSSS) shows a compositional bias: polar residues. 266 to 277 (ICYTSGTTGTPK) serves as a coordination point for ATP. The fatty acid-binding stretch occupies residues 526-550 (DGWLHTGDIGLWLPGGRLKIIDRKK). Positions 698–700 (SKL) match the Microbody targeting signal motif.

It belongs to the ATP-dependent AMP-binding enzyme family. In terms of assembly, interacts with PEX5. It depends on Mg(2+) as a cofactor. Expressed in roots, stems, leaves flowers and germinating seedling. Preferentially expressed in seeds.

Its subcellular location is the peroxisome. It catalyses the reaction a long-chain fatty acid + ATP + CoA = a long-chain fatty acyl-CoA + AMP + diphosphate. It carries out the reaction decanoate + ATP + CoA = decanoyl-CoA + AMP + diphosphate. The enzyme catalyses dodecanoate + ATP + CoA = dodecanoyl-CoA + AMP + diphosphate. The catalysed reaction is tetradecanoate + ATP + CoA = tetradecanoyl-CoA + AMP + diphosphate. It catalyses the reaction hexadecanoate + ATP + CoA = hexadecanoyl-CoA + AMP + diphosphate. It carries out the reaction (9Z)-octadecenoate + ATP + CoA = (9Z)-octadecenoyl-CoA + AMP + diphosphate. The enzyme catalyses (9Z,12Z)-octadecadienoate + ATP + CoA = (9Z,12Z)-octadecadienoyl-CoA + AMP + diphosphate. The catalysed reaction is (9Z,12Z,15Z)-octadecatrienoate + ATP + CoA = (9Z,12Z,15Z)-octadecatrienoyl-CoA + AMP + diphosphate. It functions in the pathway lipid metabolism; fatty acid metabolism. Activation of long-chain fatty acids for both synthesis of cellular lipids, and degradation via beta-oxidation. Preferentially uses palmitate, palmitoleate, oleate, linoleate and eicosenoate as substrates. Can use myristate and linolenate as substrates. Functions redundantly with LACS6 in lipid mobilization for beta-oxidation during seed germination, which is essential for postgerminative growth and seedling establishment. The protein is Long chain acyl-CoA synthetase 7, peroxisomal of Arabidopsis thaliana (Mouse-ear cress).